Reading from the N-terminus, the 159-residue chain is CASP-like protein 1C1 (159 aa).

The Cytoplasmic portion of the chain corresponds to 1–6 (MAKIKR). A helical membrane pass occupies residues 7 to 27 (IITTLVRLLVLGAALSATIVM). Residues 28–50 (VTSHDSAEVLNLSFDAKYTNARA) are Extracellular-facing. An N-linked (GlcNAc...) asparagine glycan is attached at N38. A helical membrane pass occupies residues 51-73 (FVYFAITNAIASGYSFIALFLSF). The Cytoplasmic portion of the chain corresponds to 74-86 (STPLWHLVFLLDV). Residues 87–107 (FMTLLLTSSISVALAIADVGK) traverse the membrane as a helical segment. At 108–130 (KGNSHAGWLPVCGQVPEFCDHVT) the chain is on the extracellular side. Residues 131-151 (GALIAGFSAAVLYLVLLLFSI) form a helical membrane-spanning segment. The Cytoplasmic portion of the chain corresponds to 152-159 (HAVLNPKP).

This sequence belongs to the Casparian strip membrane proteins (CASP) family. In terms of assembly, homodimer and heterodimers.

Its subcellular location is the cell membrane. This is CASP-like protein 1C1 from Vitis vinifera (Grape).